The chain runs to 129 residues: MLSYCLLVTGPAYGTQQASSALQFAQALLAEGHKLESVFFYREGVLNANQLTSPANDEFDLVRGWQQLGDVHQVALNVCVAAALRRGIADSQQATQLNLVGANLQPGFILSGLGELAQSVLTYDRVIQF.

Residue Cys-79 is the Cysteine persulfide intermediate of the active site.

Belongs to the DsrE/TusD family. Heterohexamer, formed by a dimer of trimers. The hexameric TusBCD complex contains 2 copies each of TusB, TusC and TusD. The TusBCD complex interacts with TusE.

Its subcellular location is the cytoplasm. In terms of biological role, part of a sulfur-relay system required for 2-thiolation of 5-methylaminomethyl-2-thiouridine (mnm(5)s(2)U) at tRNA wobble positions. Accepts sulfur from TusA and transfers it in turn to TusE. This is Sulfurtransferase TusD from Pectobacterium atrosepticum (strain SCRI 1043 / ATCC BAA-672) (Erwinia carotovora subsp. atroseptica).